Here is a 424-residue protein sequence, read N- to C-terminus: Calreticulin (424 aa).

Positions 1 to 29 are cleaved as a signal peptide; that stretch reads MAIRARSSSYAAAAVALALALASVAAVAG. Asparagine 61 carries an N-linked (GlcNAc...) asparagine glycan. Cysteines 115 and 147 form a disulfide. Residues tyrosine 119, lysine 121, tyrosine 138, and aspartate 145 each contribute to the an alpha-D-glucoside site. 7 repeat units span residues 201–212, 220–231, 237–248, 255–266, 270–280, 284–294, and 298–308. The interval 201 to 266 is 4 X approximate repeats; that stretch reads KQSGSIYEHW…DAKKPEDWDD (66 aa). The span at 217–262 shows a compositional bias: basic and acidic residues; it reads QIKDPEAKKPEDWDDKEYIPDPEDKKPEGYDDIPKEIPDPDAKKPE. The tract at residues 217-289 is disordered; the sequence is QIKDPEAKKP…PEYKGPWKQK (73 aa). The interval 270–308 is 3 X approximate repeats; sequence GEWTAPTIPNPEYKGPWKQKKIKNPNYQGKWKAPMIDNP. Position 328 (glutamate 328) interacts with an alpha-D-glucoside. Residues 356–385 are compositionally biased toward basic and acidic residues; it reads ETWGKHKDAEKAAFDEAEKKKEEEEAAKAG. A disordered region spans residues 356-424; it reads ETWGKHKDAE…DSDDEKHDEL (69 aa). The span at 386–401 shows a compositional bias: acidic residues; sequence EDDDDLDDEDAEDEDK. Over residues 402–424 the composition is skewed to basic and acidic residues; the sequence is ADEKADSDAEDGKDSDDEKHDEL. The Prevents secretion from ER signature appears at 421-424; the sequence is HDEL.

This sequence belongs to the calreticulin family. Post-translationally, phosphorylated.

It localises to the endoplasmic reticulum lumen. Functionally, molecular calcium-binding chaperone promoting folding, oligomeric assembly and quality control in the ER via the calreticulin/calnexin cycle. This lectin may interact transiently with almost all of the monoglucosylated glycoproteins that are synthesized in the ER. The chain is Calreticulin from Oryza sativa subsp. japonica (Rice).